A 430-amino-acid polypeptide reads, in one-letter code: Adenylosuccinate synthetase (430 aa).

GTP is bound by residues 13-19 (GDEGKGK) and 41-43 (GHT). The Proton acceptor role is filled by Asp-14. The Mg(2+) site is built by Asp-14 and Gly-41. IMP contacts are provided by residues 14–17 (DEGK), 39–42 (NAGH), Thr-130, Arg-144, Gln-225, Thr-240, and Arg-304. His-42 functions as the Proton donor in the catalytic mechanism. 300-306 (ATTGRKR) is a substrate binding site. Residues Arg-306, 332-334 (KLD), and 414-416 (STG) each bind GTP.

This sequence belongs to the adenylosuccinate synthetase family. In terms of assembly, homodimer. It depends on Mg(2+) as a cofactor.

Its subcellular location is the cytoplasm. The enzyme catalyses IMP + L-aspartate + GTP = N(6)-(1,2-dicarboxyethyl)-AMP + GDP + phosphate + 2 H(+). Its pathway is purine metabolism; AMP biosynthesis via de novo pathway; AMP from IMP: step 1/2. Its function is as follows. Plays an important role in the de novo pathway of purine nucleotide biosynthesis. Catalyzes the first committed step in the biosynthesis of AMP from IMP. This is Adenylosuccinate synthetase from Teredinibacter turnerae (strain ATCC 39867 / T7901).